A 167-amino-acid polypeptide reads, in one-letter code: Large ribosomal subunit protein uL10 (167 aa).

This sequence belongs to the universal ribosomal protein uL10 family. Part of the ribosomal stalk of the 50S ribosomal subunit. The N-terminus interacts with L11 and the large rRNA to form the base of the stalk. The C-terminus forms an elongated spine to which L12 dimers bind in a sequential fashion forming a multimeric L10(L12)X complex.

Functionally, forms part of the ribosomal stalk, playing a central role in the interaction of the ribosome with GTP-bound translation factors. This chain is Large ribosomal subunit protein uL10, found in Lactiplantibacillus plantarum (strain ATCC BAA-793 / NCIMB 8826 / WCFS1) (Lactobacillus plantarum).